We begin with the raw amino-acid sequence, 405 residues long: L-carnitine CoA-transferase (405 aa).

CoA contacts are provided by lysine 97 and arginine 104. Aspartate 169 serves as the catalytic Nucleophile.

Belongs to the CoA-transferase III family. CaiB subfamily. Homodimer.

The protein localises to the cytoplasm. It catalyses the reaction crotonobetainyl-CoA + (R)-carnitine = crotonobetaine + (R)-carnitinyl-CoA. The catalysed reaction is 4-(trimethylamino)butanoyl-CoA + (R)-carnitine = (R)-carnitinyl-CoA + 4-(trimethylamino)butanoate. Its pathway is amine and polyamine metabolism; carnitine metabolism. Its function is as follows. Catalyzes the reversible transfer of the CoA moiety from gamma-butyrobetainyl-CoA to L-carnitine to generate L-carnitinyl-CoA and gamma-butyrobetaine. Is also able to catalyze the reversible transfer of the CoA moiety from gamma-butyrobetainyl-CoA or L-carnitinyl-CoA to crotonobetaine to generate crotonobetainyl-CoA. In Salmonella typhi, this protein is L-carnitine CoA-transferase (caiB).